A 316-amino-acid chain; its full sequence is Exonuclease DPD1, chloroplastic/mitochondrial (316 aa).

A chloroplast and mitochondrion-targeting transit peptide spans 1-63 (MCISISQVSR…NVSTTTQGSR (63 aa)). Positions 112 to 282 (IVSDLETTGL…SDVLLLSKVF (171 aa)) constitute an Exonuclease domain. Residues aspartate 115 and glutamate 117 each contribute to the Mg(2+) site. The Proton donor/acceptor role is filled by histidine 269. Aspartate 274 contacts Mg(2+).

This sequence belongs to the exonuclease superfamily. TREX family. Mg(2+) serves as cofactor. Highly expressed in mature pollen grains. Detected in flowers, senescing leaves and roots.

Its subcellular location is the plastid. The protein resides in the chloroplast. It is found in the mitochondrion. With respect to regulation, inhibited by free nucleotide diphosphates (NDPs). Its function is as follows. Exonuclease required for organelle DNA degradation during pollen development. Plays non-essential roles in maternal inheritance. May be part of the DNA salvage machinery. This is Exonuclease DPD1, chloroplastic/mitochondrial from Arabidopsis thaliana (Mouse-ear cress).